Consider the following 315-residue polypeptide: Cell division protein FtsZ (315 aa).

GTP contacts are provided by residues 55-57 (GTG), Glu-98, Arg-102, and Asp-146.

This sequence belongs to the FtsZ family. Homodimer. Polymerizes to form a dynamic ring structure in a strictly GTP-dependent manner. Interacts directly with several other division proteins.

The protein resides in the cytoplasm. Functionally, essential cell division protein that forms a contractile ring structure (Z ring) at the future cell division site. The regulation of the ring assembly controls the timing and the location of cell division. One of the functions of the FtsZ ring is to recruit other cell division proteins to the septum to produce a new cell wall between the dividing cells. Binds GTP and shows GTPase activity. This chain is Cell division protein FtsZ, found in Wolbachia pipientis.